Reading from the N-terminus, the 699-residue chain is Auxin response factor 10 (699 aa).

Disordered stretches follow at residues 108 to 136 (AAEARREEENSRPRPTSFAKTLTQSDANN), 505 to 533 (TDLTIGSPGKPDDAACSPSSGGKKIDDTK), and 551 to 595 (KNGN…SWSL). Residues 110-119 (EARREEENSR) show a composition bias toward basic and acidic residues. The segment covering 125-135 (FAKTLTQSDAN) has biased composition (polar residues). Positions 125-227 (FAKTLTQSDA…NIHVGLRRAK (103 aa)) form a DNA-binding region, TF-B3. Positions 570-593 (PNTSEGSDSGVTQGSPTKNTTPSW) are enriched in polar residues. Residues 613-693 (PGQCKVFVES…RKLRILTDAG (81 aa)) enclose the PB1 domain.

It belongs to the ARF family. Homodimers and heterodimers.

It is found in the nucleus. Auxin response factors (ARFs) are transcriptional factors that bind specifically to the DNA sequence 5'-TGTCTC-3' found in the auxin-responsive promoter elements (AuxREs). This chain is Auxin response factor 10 (ARF10), found in Oryza sativa subsp. indica (Rice).